Reading from the N-terminus, the 240-residue chain is Regulatory protein SdiA (240 aa).

Residues 173–238 (VMTPEMNFSK…QVACYAAATG (66 aa)) enclose the HTH luxR-type domain. The H-T-H motif DNA-binding region spans 197-216 (SAEIAMILSISENTVNFHQK).

Functionally, activates cell division by specifically increasing transcription from one of the two promoters that lie immediately upstream of the ftsQAZ gene cluster. Activates ydiV expression in response to extracellular autoinducer AI-1 (Vibrio fischeri autoinducer oxoC6). This Escherichia coli (strain K12) protein is Regulatory protein SdiA (sdiA).